Here is a 165-residue protein sequence, read N- to C-terminus: Phosphopantetheine adenylyltransferase (165 aa).

T9 lines the substrate pocket. Residues 9-10 and H17 each bind ATP; that span reads TF. The substrate site is built by K41, L73, and R87. Residues 88–90, E98, and 123–129 contribute to the ATP site; these read GLR and YQFISGT.

This sequence belongs to the bacterial CoaD family. Homohexamer. The cofactor is Mg(2+).

The protein localises to the cytoplasm. It catalyses the reaction (R)-4'-phosphopantetheine + ATP + H(+) = 3'-dephospho-CoA + diphosphate. It functions in the pathway cofactor biosynthesis; coenzyme A biosynthesis; CoA from (R)-pantothenate: step 4/5. In terms of biological role, reversibly transfers an adenylyl group from ATP to 4'-phosphopantetheine, yielding dephospho-CoA (dPCoA) and pyrophosphate. In Burkholderia lata (strain ATCC 17760 / DSM 23089 / LMG 22485 / NCIMB 9086 / R18194 / 383), this protein is Phosphopantetheine adenylyltransferase.